A 30-amino-acid chain; its full sequence is Bacteriocin plantaricin KL-1Y (30 aa).

Its subcellular location is the secreted. In terms of biological role, bacteriocin with activity against species of Lactobacillus, Lactococcus, Pediococcus, Leuconostoc and against B.subtilis and, to a lesser extent, against B.coagulans, B.cereus and species of Enterococcus, Listeria, Kocuria, Staphylococcus, Corynebacterium, Salmonella, Pseudomonas and Escherichia. In Lactiplantibacillus plantarum (Lactobacillus plantarum), this protein is Bacteriocin plantaricin KL-1Y.